Reading from the N-terminus, the 175-residue chain is Large ribosomal subunit protein uL10 (175 aa).

Belongs to the universal ribosomal protein uL10 family. As to quaternary structure, part of the ribosomal stalk of the 50S ribosomal subunit. The N-terminus interacts with L11 and the large rRNA to form the base of the stalk. The C-terminus forms an elongated spine to which L12 dimers bind in a sequential fashion forming a multimeric L10(L12)X complex.

Its function is as follows. Forms part of the ribosomal stalk, playing a central role in the interaction of the ribosome with GTP-bound translation factors. In Psychrobacter sp. (strain PRwf-1), this protein is Large ribosomal subunit protein uL10.